Reading from the N-terminus, the 129-residue chain is MPTIQQLIRHGRSMKASKTASPALEKCPQKRGVCTRVYTTTPKKPNSALRKVARVRLSNKIEVTAYIPGEGHNLQEHSIVLIRGGRVKDLPGVRYHIVRGSLDTSGVADRKQSRSKYGAKQPKAGAAKK.

A 3-methylthioaspartic acid modification is found at aspartate 89. Residues 101 to 129 form a disordered region; the sequence is SLDTSGVADRKQSRSKYGAKQPKAGAAKK. Over residues 116-129 the composition is skewed to low complexity; the sequence is KYGAKQPKAGAAKK.

This sequence belongs to the universal ribosomal protein uS12 family. Part of the 30S ribosomal subunit. Contacts proteins S8 and S17. May interact with IF1 in the 30S initiation complex.

With S4 and S5 plays an important role in translational accuracy. Its function is as follows. Interacts with and stabilizes bases of the 16S rRNA that are involved in tRNA selection in the A site and with the mRNA backbone. Located at the interface of the 30S and 50S subunits, it traverses the body of the 30S subunit contacting proteins on the other side and probably holding the rRNA structure together. The combined cluster of proteins S8, S12 and S17 appears to hold together the shoulder and platform of the 30S subunit. The polypeptide is Small ribosomal subunit protein uS12 (Chlorobaculum parvum (strain DSM 263 / NCIMB 8327) (Chlorobium vibrioforme subsp. thiosulfatophilum)).